Consider the following 339-residue polypeptide: DNA-directed RNA polymerase subunit alpha (339 aa).

Positions 1-233 are alpha N-terminal domain (alpha-NTD); that stretch reads MVREEVAGST…DLFLPFLHAE (233 aa). The alpha C-terminal domain (alpha-CTD) stretch occupies residues 264-339; that stretch reads KKGIPLNYIF…IDLLKNKLSF (76 aa).

It belongs to the RNA polymerase alpha chain family. In plastids the minimal PEP RNA polymerase catalytic core is composed of four subunits: alpha, beta, beta', and beta''. When a (nuclear-encoded) sigma factor is associated with the core the holoenzyme is formed, which can initiate transcription.

It is found in the plastid. The protein localises to the chloroplast. The catalysed reaction is RNA(n) + a ribonucleoside 5'-triphosphate = RNA(n+1) + diphosphate. Its function is as follows. DNA-dependent RNA polymerase catalyzes the transcription of DNA into RNA using the four ribonucleoside triphosphates as substrates. This Psathyrostachys rupestris (Hordeum rupestre) protein is DNA-directed RNA polymerase subunit alpha.